Consider the following 410-residue polypeptide: Peptidase T (410 aa).

H79 contributes to the Zn(2+) binding site. The active site involves D81. A Zn(2+)-binding site is contributed by D142. The active-site Proton acceptor is the E176. The Zn(2+) site is built by E177, D199, and H381.

This sequence belongs to the peptidase M20B family. It depends on Zn(2+) as a cofactor.

The protein localises to the cytoplasm. The enzyme catalyses Release of the N-terminal residue from a tripeptide.. In terms of biological role, cleaves the N-terminal amino acid of tripeptides. This is Peptidase T from Bacillus pumilus (strain SAFR-032).